We begin with the raw amino-acid sequence, 159 residues long: Neurotrophin-3 (159 aa).

The signal sequence occupies residues 1-3; it reads IQS. The propeptide occupies 4–115; that stretch reads TSMDQGILTE…VQNRTSRRKR (112 aa). The interval 91 to 129 is disordered; that stretch reads APLEPPPLYLTEEPLVQNRTSRRKREGKRHRGEYSVCDS. An N-linked (GlcNAc...) asparagine glycan is attached at Asn108. A compositionally biased stretch (basic residues) spans 110–121; sequence TSRRKREGKRHR.

It belongs to the NGF-beta family.

It localises to the secreted. Its function is as follows. Seems to promote the survival of visceral and proprioceptive sensory neurons. The sequence is that of Neurotrophin-3 (NTF3) from Candoia carinata (Papuan tree boa).